Reading from the N-terminus, the 558-residue chain is Cytochrome P450 monooxygenase sdnT (558 aa).

A helical transmembrane segment spans residues 21–41; it reads IISLTTCFVCAFAVSFVALAI. The tract at residues 298-317 is disordered; sequence QNAGSNTRPKPPKRKQDTQP. N-linked (GlcNAc...) asparagine glycosylation is found at asparagine 464 and asparagine 495. Residue cysteine 505 coordinates heme.

Belongs to the cytochrome P450 family. It depends on heme as a cofactor.

The protein resides in the membrane. Its pathway is antibiotic biosynthesis. In terms of biological role, cytochrome P450 monooxygenase; part of the gene cluster that mediates the biosynthesis of sordarin and hypoxysordarin, glycoside antibiotics with a unique tetracyclic diterpene aglycone structure. First, the geranylgeranyl diphosphate synthase sdnC constructs GGDP from farnesyl diphosphate and isopentenyl diphosphate. The diterpene cyclase sdnA then catalyzes the cyclization of GGDP to afford cycloaraneosene. Cycloaraneosene is then hydroxylated four times by the putative cytochrome P450 monooxygenases sdnB, sdnE, sdnF and sdnH to give a hydroxylated cycloaraneosene derivative such as cycloaraneosene-8,9,13,19-tetraol. Although the order of the hydroxylations is unclear, at least C8, C9 and C13 of the cycloaraneosene skeleton are hydroxylated before the sordaricin formation. Dehydration of the 13-hydroxy group of the hydroxylated cycloaraneosene derivative might be catalyzed by an unassigned hypothetical protein such as sdnG and sdnP to construct the cyclopentadiene moiety. The FAD-dependent oxidoreductase sdnN is proposed to catalyze the oxidation at C9 of the hydroxylated cycloaraneosene derivative and also catalyze the Baeyer-Villiger oxidation to give the lactone intermediate. The presumed lactone intermediate would be hydrolyzed to give an acrolein moiety and a carboxylate moiety. Then, [4+2]cycloaddition would occur between the acrolein moiety and the cyclopentadiene moiety to give sordaricin. SdnN might also be involved in the [4+2]cycloaddition after the hypothesized oxidation to accommodate the oxidized product and prompt the [4+2]cycloaddition. GDP-6-deoxy-D-altrose may be biosynthesized from GDP-D-mannose by the putative GDP-mannose-4,6-dehydratase sdnI and the short-chain dehydrogenase sdnK. The glycosyltransferase sdnJ catalyzes the attachment of 6-deoxy-D-altrose onto the 19-hydroxy group of sordaricin to give 4'-O-demethylsordarin. The methyltransferase sdnD would complete the biosynthesis of sordarin. Sordarin can be further modified into hypoxysordarin. The unique acyl chain at the 3'-hydroxy group of hypoxysordarin would be constructed by an iterative type I PKS sdnO and the trans-acting polyketide methyltransferase sdnL. SdnL would be responsible for the introduction of an alpha-methyl group of the polyketide chain. Alternatively, the beta-lactamase-like protein sdnR might be responsible for the cleavage and transfer of the polyketide chain from the PKS sdnO to sordarin. Two putative cytochrome P450 monooxygenases, sdnQ and sdnT, might catalyze the epoxidations of the polyketide chain to complete the biosynthesis of hypoxysordarin. Transcriptional regulators sdnM and sdnS are presumably encoded for the transcriptional regulation of the expression of the sdn gene cluster. This is Cytochrome P450 monooxygenase sdnT from Sordaria araneosa (Pleurage araneosa).